Reading from the N-terminus, the 548-residue chain is Glucose-6-phosphate isomerase (548 aa).

E353 functions as the Proton donor in the catalytic mechanism. Active-site residues include H384 and K512.

It belongs to the GPI family.

The protein localises to the cytoplasm. It catalyses the reaction alpha-D-glucose 6-phosphate = beta-D-fructose 6-phosphate. It participates in carbohydrate biosynthesis; gluconeogenesis. It functions in the pathway carbohydrate degradation; glycolysis; D-glyceraldehyde 3-phosphate and glycerone phosphate from D-glucose: step 2/4. Functionally, catalyzes the reversible isomerization of glucose-6-phosphate to fructose-6-phosphate. The polypeptide is Glucose-6-phosphate isomerase (Chlorobium chlorochromatii (strain CaD3)).